A 201-amino-acid polypeptide reads, in one-letter code: Cold shock domain-containing protein 4 (201 aa).

S2 is modified (N-acetylserine). Residues 14–81 (RRKGTVKWFD…RPKAIEVSGP (68 aa)) form the CSD domain. The disordered stretch occupies residues 66 to 109 (EVDNSGRPKAIEVSGPDGAPVQGNSGGGGSSGGRGGFGGGGGRG). A compositionally biased stretch (gly residues) spans 89–109 (NSGGGGSSGGRGGFGGGGGRG). 2 consecutive CCHC-type zinc fingers follow at residues 136–153 (NSCF…ECSQ) and 180–197 (LSCY…DCTS).

This sequence belongs to the cold shock protein (CSP) family. Mostly expressed in shoot apices and siliques, and, to a lower extent, in roots, cotyledons, stems, shoots, leaves, floral buds and flowers. Present in shoot apical meristems and siliques (at protein level). Very low levels are observed in cv. Landsberg erecta compared to cv. Columbia.

The protein resides in the cytoplasm. It is found in the nucleus. It localises to the nucleolus. Its function is as follows. Chaperone that binds to and unwinds RNA and both single-stranded DNA and double-stranded DNA (ssDNA and dsDNA DNA). Regulates the flowering transition and flower and seed development, particularly at late stages of embryo development, through regulation of gene expression (including MEA, FIS2, AP1, CAL, AG and SHP2). The chain is Cold shock domain-containing protein 4 (CSP4) from Arabidopsis thaliana (Mouse-ear cress).